A 247-amino-acid chain; its full sequence is MNVLLCSINTLKGLYDISGVEVGQHLYWKIGGFQVHAQVLITSWVVIAILLGSSIIAVRNPQTIPTDGQNFFEYVLEFIRDVSRTQIGEEYGPWVPFIGTMFLFIFVSNWSGALLPWKIIQLPHGELAAPTNDINTTVALALLTSVAYFYAGLTKKGLGYFGKYIQPTPILLPINILEDFTKPLSLSFRLFGNILADELVVVVLVSLVPLVVPIPVMFLGLFTSGIQALIFATLAAAYIGESMEGHH.

The next 5 helical transmembrane spans lie at 38–58, 95–115, 134–154, 199–219, and 220–240; these read QVLI…IIAV, VPFI…GALL, INTT…AGLT, LVVV…VMFL, and GLFT…AYIG.

Belongs to the ATPase A chain family. As to quaternary structure, F-type ATPases have 2 components, CF(1) - the catalytic core - and CF(0) - the membrane proton channel. CF(1) has five subunits: alpha(3), beta(3), gamma(1), delta(1), epsilon(1). CF(0) has four main subunits: a, b, b' and c.

The protein localises to the plastid. Its subcellular location is the chloroplast thylakoid membrane. Key component of the proton channel; it plays a direct role in the translocation of protons across the membrane. This Morus indica (Mulberry) protein is ATP synthase subunit a, chloroplastic.